The sequence spans 526 residues: ATP synthase subunit alpha (526 aa).

171-178 contacts ATP; that stretch reads GDRQVGKT.

Belongs to the ATPase alpha/beta chains family. F-type ATPases have 2 components, CF(1) - the catalytic core - and CF(0) - the membrane proton channel. CF(1) has five subunits: alpha(3), beta(3), gamma(1), delta(1), epsilon(1). CF(0) has three main subunits: a(1), b(2) and c(9-12). The alpha and beta chains form an alternating ring which encloses part of the gamma chain. CF(1) is attached to CF(0) by a central stalk formed by the gamma and epsilon chains, while a peripheral stalk is formed by the delta and b chains.

The protein resides in the cell inner membrane. The catalysed reaction is ATP + H2O + 4 H(+)(in) = ADP + phosphate + 5 H(+)(out). In terms of biological role, produces ATP from ADP in the presence of a proton gradient across the membrane. The alpha chain is a regulatory subunit. This Azobacteroides pseudotrichonymphae genomovar. CFP2 protein is ATP synthase subunit alpha.